Reading from the N-terminus, the 443-residue chain is Probable glycine dehydrogenase (decarboxylating) subunit 1 (443 aa).

It belongs to the GcvP family. N-terminal subunit subfamily. In terms of assembly, the glycine cleavage system is composed of four proteins: P, T, L and H. In this organism, the P 'protein' is a heterodimer of two subunits.

It catalyses the reaction N(6)-[(R)-lipoyl]-L-lysyl-[glycine-cleavage complex H protein] + glycine + H(+) = N(6)-[(R)-S(8)-aminomethyldihydrolipoyl]-L-lysyl-[glycine-cleavage complex H protein] + CO2. In terms of biological role, the glycine cleavage system catalyzes the degradation of glycine. The P protein binds the alpha-amino group of glycine through its pyridoxal phosphate cofactor; CO(2) is released and the remaining methylamine moiety is then transferred to the lipoamide cofactor of the H protein. This chain is Probable glycine dehydrogenase (decarboxylating) subunit 1, found in Solidesulfovibrio magneticus (strain ATCC 700980 / DSM 13731 / RS-1) (Desulfovibrio magneticus).